The chain runs to 120 residues: Large ribosomal subunit protein bL17 (120 aa).

Belongs to the bacterial ribosomal protein bL17 family. In terms of assembly, part of the 50S ribosomal subunit. Contacts protein L32.

The protein is Large ribosomal subunit protein bL17 of Anoxybacillus flavithermus (strain DSM 21510 / WK1).